We begin with the raw amino-acid sequence, 277 residues long: Ribosomal RNA small subunit methyltransferase A (277 aa).

6 residues coordinate S-adenosyl-L-methionine: Asn-20, Leu-22, Gly-47, Glu-68, Asp-93, and Asn-114.

Belongs to the class I-like SAM-binding methyltransferase superfamily. rRNA adenine N(6)-methyltransferase family. RsmA subfamily.

It localises to the cytoplasm. It carries out the reaction adenosine(1518)/adenosine(1519) in 16S rRNA + 4 S-adenosyl-L-methionine = N(6)-dimethyladenosine(1518)/N(6)-dimethyladenosine(1519) in 16S rRNA + 4 S-adenosyl-L-homocysteine + 4 H(+). Its function is as follows. Specifically dimethylates two adjacent adenosines (A1518 and A1519) in the loop of a conserved hairpin near the 3'-end of 16S rRNA in the 30S particle. May play a critical role in biogenesis of 30S subunits. This is Ribosomal RNA small subunit methyltransferase A from Aliivibrio salmonicida (strain LFI1238) (Vibrio salmonicida (strain LFI1238)).